The following is a 248-amino-acid chain: Large ribosomal subunit protein uL29m (248 aa).

Disordered regions lie at residues 77–107 and 223–248; these read VSKY…GFFG and AYEP…PPSS.

The protein belongs to the universal ribosomal protein uL29 family. Component of the mitochondrial large ribosomal subunit. Mature mitochondrial ribosomes consist of a small (37S) and a large (54S) subunit. The 37S subunit contains at least 33 different proteins and 1 molecule of RNA (15S). The 54S subunit contains at least 45 different proteins and 1 molecule of RNA (21S).

It is found in the mitochondrion. The polypeptide is Large ribosomal subunit protein uL29m (MRPL4) (Ajellomyces capsulatus (strain NAm1 / WU24) (Darling's disease fungus)).